The sequence spans 291 residues: Protease HtpX homolog (291 aa).

2 helical membrane-spanning segments follow: residues Ile4–Leu24 and Met38–Met58. His144 lines the Zn(2+) pocket. The active site involves Glu145. His148 contacts Zn(2+). Helical transmembrane passes span Gly152–Ala172 and Val199–Phe219. Glu224 contacts Zn(2+).

This sequence belongs to the peptidase M48B family. The cofactor is Zn(2+).

The protein resides in the cell inner membrane. The protein is Protease HtpX homolog of Prosthecochloris aestuarii (strain DSM 271 / SK 413).